A 60-amino-acid chain; its full sequence is Large ribosomal subunit protein bL32 (60 aa).

The tract at residues 1–23 (MAVPARHTSKAKKNKRRTHYKLT) is disordered. Positions 7–20 (HTSKAKKNKRRTHY) are enriched in basic residues.

This sequence belongs to the bacterial ribosomal protein bL32 family.

The sequence is that of Large ribosomal subunit protein bL32 from Streptococcus equi subsp. equi (strain 4047).